The sequence spans 296 residues: Giardin subunit alpha-3 (296 aa).

Annexin repeat units lie at residues 3-72 (DTVT…SNCW), 74-146 (ELPV…TWIK), 153-222 (NNIN…TAHY), and 226-295 (GMNN…VLWR).

This sequence belongs to the annexin family. Giardin subunit alpha subfamily.

The protein resides in the cytoplasm. Its subcellular location is the cytoskeleton. Its function is as follows. Giardins are involved in parasite attachment to the intestinal mucosa and in the cytoskeletal disassembly and reassembly that marks the transition from infectious trophozoite to transmissible cyst. They may interact with other cytoskeletal proteins such as microtubules in the microribbons or crossbridges, to maintain the integrity of the ventral disk. This Giardia intestinalis (Giardia lamblia) protein is Giardin subunit alpha-3.